A 490-amino-acid polypeptide reads, in one-letter code: ATP synthase subunit beta (490 aa).

173–180 contributes to the ATP binding site; the sequence is GGAGVGKT.

The protein belongs to the ATPase alpha/beta chains family. In terms of assembly, F-type ATPases have 2 components, CF(1) - the catalytic core - and CF(0) - the membrane proton channel. CF(1) has five subunits: alpha(3), beta(3), gamma(1), delta(1), epsilon(1). CF(0) has three main subunits: a(1), b(2) and c(9-12). The alpha and beta chains form an alternating ring which encloses part of the gamma chain. CF(1) is attached to CF(0) by a central stalk formed by the gamma and epsilon chains, while a peripheral stalk is formed by the delta and b chains.

The protein resides in the cell membrane. It catalyses the reaction ATP + H2O + 4 H(+)(in) = ADP + phosphate + 5 H(+)(out). Functionally, produces ATP from ADP in the presence of a proton gradient across the membrane. The catalytic sites are hosted primarily by the beta subunits. The sequence is that of ATP synthase subunit beta from Bifidobacterium longum (strain DJO10A).